Reading from the N-terminus, the 571-residue chain is Putative phospholipase B-like 1 (571 aa).

An N-terminal signal peptide occupies residues 1–18 (MNWIFIFLAAAVAIGCEA). Residues asparagine 62, asparagine 149, asparagine 442, and asparagine 473 are each glycosylated (N-linked (GlcNAc...) asparagine).

The protein belongs to the phospholipase B-like family.

It localises to the lysosome. Putative phospholipase. The sequence is that of Putative phospholipase B-like 1 from Caenorhabditis elegans.